An 85-amino-acid polypeptide reads, in one-letter code: Large ribosomal subunit protein bL31B (85 aa).

It belongs to the bacterial ribosomal protein bL31 family. Type B subfamily. As to quaternary structure, part of the 50S ribosomal subunit.

This is Large ribosomal subunit protein bL31B from Staphylococcus saprophyticus subsp. saprophyticus (strain ATCC 15305 / DSM 20229 / NCIMB 8711 / NCTC 7292 / S-41).